The following is a 357-amino-acid chain: Glutamine synthetase root isozyme A (357 aa).

Residues 19–99 (IIAEYIWVGG…VICDVYTPAG (81 aa)) form the GS beta-grasp domain. The GS catalytic domain occupies 106–357 (KRYNAAKIFS…AETTILWKKP (252 aa)).

Belongs to the glutamine synthetase family. As to quaternary structure, homooctamer.

It localises to the cytoplasm. It catalyses the reaction L-glutamate + NH4(+) + ATP = L-glutamine + ADP + phosphate + H(+). This chain is Glutamine synthetase root isozyme A (GS3A), found in Pisum sativum (Garden pea).